Reading from the N-terminus, the 386-residue chain is uncharacterized protein (386 aa).

A run of 9 helical transmembrane segments spans residues 48 to 68, 78 to 98, 136 to 156, 171 to 191, 213 to 233, 253 to 273, 285 to 305, 316 to 336, and 344 to 364; these read NLIT…MLVY, PSWV…FDAI, LQLD…YFYI, YFSG…LTAI, FLPY…ALLL, VIKA…VFSL, FLTI…VVIV, WNVL…FGVL, and FFCY…HVIA.

The protein belongs to the CDP-alcohol phosphatidyltransferase class-I family.

It localises to the membrane. This is an uncharacterized protein from Schizosaccharomyces pombe (strain 972 / ATCC 24843) (Fission yeast).